Consider the following 423-residue polypeptide: Gamma-glutamyl phosphate reductase (423 aa).

The protein belongs to the gamma-glutamyl phosphate reductase family.

The protein localises to the cytoplasm. It catalyses the reaction L-glutamate 5-semialdehyde + phosphate + NADP(+) = L-glutamyl 5-phosphate + NADPH + H(+). It participates in amino-acid biosynthesis; L-proline biosynthesis; L-glutamate 5-semialdehyde from L-glutamate: step 2/2. Its function is as follows. Catalyzes the NADPH-dependent reduction of L-glutamate 5-phosphate into L-glutamate 5-semialdehyde and phosphate. The product spontaneously undergoes cyclization to form 1-pyrroline-5-carboxylate. This is Gamma-glutamyl phosphate reductase from Burkholderia thailandensis (strain ATCC 700388 / DSM 13276 / CCUG 48851 / CIP 106301 / E264).